The chain runs to 379 residues: Cytochrome b (379 aa).

A run of 4 helical transmembrane segments spans residues 33 to 53, 77 to 98, 113 to 133, and 178 to 198; these read FGSLLGACLTIQIITGLFLAM, WTIRYLHANGASLFFLCLFIHV, WNIGIMLLFSVMATAFMGYVL, and FFALHFILPFIISALTMIHLL. 2 residues coordinate heme b: H83 and H97. The heme b site is built by H182 and H196. Residue H201 participates in a ubiquinone binding. A run of 4 helical transmembrane segments spans residues 226–246, 288–308, 320–340, and 347–367; these read TKDFLGLLLLILLLMTLTLFY, LGGVVALIMSILILAIMPFLQ, LSQFLFWILVADLLTLTWIGG, and FINIGQMASILYFSLMVFIMP.

The protein belongs to the cytochrome b family. In terms of assembly, the cytochrome bc1 complex contains 11 subunits: 3 respiratory subunits (MT-CYB, CYC1 and UQCRFS1), 2 core proteins (UQCRC1 and UQCRC2) and 6 low-molecular weight proteins (UQCRH/QCR6, UQCRB/QCR7, UQCRQ/QCR8, UQCR10/QCR9, UQCR11/QCR10 and a cleavage product of UQCRFS1). This cytochrome bc1 complex then forms a dimer. Requires heme b as cofactor.

Its subcellular location is the mitochondrion inner membrane. Its function is as follows. Component of the ubiquinol-cytochrome c reductase complex (complex III or cytochrome b-c1 complex) that is part of the mitochondrial respiratory chain. The b-c1 complex mediates electron transfer from ubiquinol to cytochrome c. Contributes to the generation of a proton gradient across the mitochondrial membrane that is then used for ATP synthesis. The protein is Cytochrome b (MT-CYB) of Lepilemur aeeclis (Sportive lemur).